A 698-amino-acid polypeptide reads, in one-letter code: DNA ligase (698 aa).

NAD(+) is bound by residues 35-39 (DSVYD), 84-85 (SL), and glutamate 123. Lysine 125 (N6-AMP-lysine intermediate) is an active-site residue. NAD(+)-binding residues include arginine 146, glutamate 183, lysine 302, and lysine 326. Residues cysteine 420, cysteine 423, cysteine 438, and cysteine 443 each contribute to the Zn(2+) site. A BRCT domain is found at 612–698 (NGKGHLNGQT…QNSADTIHLL (87 aa)).

The protein belongs to the NAD-dependent DNA ligase family. LigA subfamily. Mg(2+) serves as cofactor. It depends on Mn(2+) as a cofactor.

It carries out the reaction NAD(+) + (deoxyribonucleotide)n-3'-hydroxyl + 5'-phospho-(deoxyribonucleotide)m = (deoxyribonucleotide)n+m + AMP + beta-nicotinamide D-nucleotide.. In terms of biological role, DNA ligase that catalyzes the formation of phosphodiester linkages between 5'-phosphoryl and 3'-hydroxyl groups in double-stranded DNA using NAD as a coenzyme and as the energy source for the reaction. It is essential for DNA replication and repair of damaged DNA. This chain is DNA ligase, found in Synechococcus sp. (strain WH7803).